The chain runs to 131 residues: Sperm microtubule inner protein 11 (131 aa).

The interval 17 to 44 (SKKRDKTEETNQKDPVPTRLPPIFSEDG) is disordered.

In terms of assembly, microtubule inner protein component of sperm flagellar doublet microtubules. As to expression, expressed in sperm.

The protein localises to the cytoplasm. The protein resides in the cytoskeleton. Its subcellular location is the flagellum axoneme. Its function is as follows. Microtubule inner protein (MIP) part of the dynein-decorated doublet microtubules (DMTs) in flagellum axoneme. May serve to reinforce and thus stabilize the microtubule structure in the sperm flagella. In Bos taurus (Bovine), this protein is Sperm microtubule inner protein 11 (SPMIP11).